The primary structure comprises 277 residues: Large ribosomal subunit protein uL2c (277 aa).

The tract at residues 30–60 is disordered; sequence RKKLTSGQHSGKGRNNRGIITSRHRGGGHKR. A compositionally biased stretch (basic residues) spans 51–60; that stretch reads SRHRGGGHKR.

The protein belongs to the universal ribosomal protein uL2 family. In terms of assembly, part of the 50S ribosomal subunit.

It is found in the plastid. The protein resides in the chloroplast. The polypeptide is Large ribosomal subunit protein uL2c (rpl2) (Angiopteris evecta (Mule's foot fern)).